Here is a 503-residue protein sequence, read N- to C-terminus: Drimenol monooxygenase (503 aa).

Residues 7 to 23 form a helical membrane-spanning segment; it reads MICIVVSGLLLYSSRTS. Serine 471 contacts heme.

This sequence belongs to the cytochrome P450 family. Heme is required as a cofactor.

The protein localises to the membrane. The catalysed reaction is (5S,9S,10S)-drim-7-en-11-ol + reduced [NADPH--hemoprotein reductase] + O2 = (5S,10S)-(9R)-7-drimene-11,12-diol + oxidized [NADPH--hemoprotein reductase] + H2O + H(+). Functionally, catalyzes the conversion of drimenol to drimendiol, a precursor of the sesquiterpenoid polygodial. Polygodial has been shown to be an antifeedant for a number of herbivorous insects. This chain is Drimenol monooxygenase, found in Persicaria hydropiper (Marshpepper knotweed).